The following is a 604-amino-acid chain: Rhotekin-2 (604 aa).

One can recognise an REM-1 domain in the interval 1–74 (MEGQLLRGLA…LQKSKEEIAN (74 aa)). Positions 53 to 79 (VCSARIQAYTAELQKSKEEIANQTGAR) form a coiled coil. A PH domain is found at 281–387 (ADAFAGFLNE…WMGAFRQHFF (107 aa)). Positions 481-590 (LSPIGEPAPD…PVPVPRQKSI (110 aa)) are disordered. Residues 514–527 (GRANQSKDSATQAG) are compositionally biased toward polar residues. Residues 529–543 (SGASSSPSDPRLSPP) show a composition bias toward low complexity.

In terms of biological role, may play an important role in lymphopoiesis. In Mus musculus (Mouse), this protein is Rhotekin-2 (Rtkn2).